Here is a 757-residue protein sequence, read N- to C-terminus: Vitamin K-dependent gamma-carboxylase (757 aa).

N-acetylalanine is present on A2. Over 2 to 60 the chain is Cytoplasmic; that stretch reads AVHRGSALVAPASDKVQKNKSAQTSGLKQGSRMEKILGFEWTDLSSWQSVVTLLNKPTD. A helical membrane pass occupies residues 61-81; the sequence is PANLAVFRFLFAFLMLLDIPQ. Over 82-113 the chain is Lumenal; the sequence is ERGLSSLDRKYLDGLDVCRFPLLDALRPLPLD. A disulfide bridge connects residues C99 and C450. Residues 114–134 traverse the membrane as a helical segment; the sequence is WMYLVYTIMFLGALGMMLGLC. At 135–136 the chain is on the cytoplasmic side; it reads YR. The chain crosses the membrane as a helical span at residues 137–157; sequence LSCVLFLLPYWYVFLLDKTSW. Residues 158 to 292 lie on the Lumenal side of the membrane; the sequence is NNHSYLYGLL…VSYFHCMNSQ (135 aa). Residues 293 to 313 form a helical membrane-spanning segment; that stretch reads LFSIGMFPYVMLASSPLFCSA. Topologically, residues 314–361 are cytoplasmic; that stretch reads EWPRKLVARCPKRLQELLPTKAAPRPSASCVYKRSRGKAGPKPGLRHQ. Residues 362 to 382 traverse the membrane as a helical segment; the sequence is LGAIFTLLYLLEQLFLPYSHF. At 383 to 757 the chain is on the lumenal side; sequence LTQGYNNWTN…PDSEHVHSEF (375 aa). Residues 729-757 are disordered; the sequence is EPVDESSASNTDSSNHPSEPDSEHVHSEF. The segment covering 734-745 has biased composition (polar residues); that stretch reads SSASNTDSSNHP. The segment covering 746 to 757 has biased composition (basic and acidic residues); the sequence is SEPDSEHVHSEF.

Belongs to the vitamin K-dependent gamma-carboxylase family. In terms of assembly, monomer. May interact with CALU.

It localises to the endoplasmic reticulum membrane. The enzyme catalyses 4-carboxy-L-glutamyl-[protein] + 2,3-epoxyphylloquinone + H2O + H(+) = phylloquinol + L-glutamyl-[protein] + CO2 + O2. In terms of biological role, mediates the vitamin K-dependent carboxylation of glutamate residues to calcium-binding gamma-carboxyglutamate (Gla) residues with the concomitant conversion of the reduced hydroquinone form of vitamin K to vitamin K epoxide. Catalyzes gamma-carboxylation of various proteins, such as blood coagulation factors (F2, F7, F9 and F10), osteocalcin (bglap and bglap2) or matrix Gla protein (MGP). The protein is Vitamin K-dependent gamma-carboxylase (Ggcx) of Mus musculus (Mouse).